A 118-amino-acid chain; its full sequence is Large ribosomal subunit protein uL24 (118 aa).

The protein belongs to the universal ribosomal protein uL24 family. In terms of assembly, part of the 50S ribosomal subunit.

Its function is as follows. One of two assembly initiator proteins, it binds directly to the 5'-end of the 23S rRNA, where it nucleates assembly of the 50S subunit. One of the proteins that surrounds the polypeptide exit tunnel on the outside of the subunit. This is Large ribosomal subunit protein uL24 from Prochlorococcus marinus (strain MIT 9215).